The primary structure comprises 137 residues: Large ribosomal subunit protein uL16 (137 aa).

The protein belongs to the universal ribosomal protein uL16 family. As to quaternary structure, part of the 50S ribosomal subunit.

In terms of biological role, binds 23S rRNA and is also seen to make contacts with the A and possibly P site tRNAs. This Rhodopseudomonas palustris (strain HaA2) protein is Large ribosomal subunit protein uL16.